Reading from the N-terminus, the 118-residue chain is Probable FK506-binding protein (118 aa).

In terms of domain architecture, PPIase FKBP-type spans 33-118; the sequence is GGEVEVHYVG…LVFIIDLISA (86 aa).

It belongs to the FKBP-type PPIase family.

The enzyme catalyses [protein]-peptidylproline (omega=180) = [protein]-peptidylproline (omega=0). Functionally, PPIases accelerate the folding of proteins. The chain is Probable FK506-binding protein from Corynebacterium glutamicum (strain ATCC 13032 / DSM 20300 / JCM 1318 / BCRC 11384 / CCUG 27702 / LMG 3730 / NBRC 12168 / NCIMB 10025 / NRRL B-2784 / 534).